The following is an 89-amino-acid chain: Small ribosomal subunit protein uS15 (89 aa).

Belongs to the universal ribosomal protein uS15 family. As to quaternary structure, part of the 30S ribosomal subunit. Forms a bridge to the 50S subunit in the 70S ribosome, contacting the 23S rRNA.

In terms of biological role, one of the primary rRNA binding proteins, it binds directly to 16S rRNA where it helps nucleate assembly of the platform of the 30S subunit by binding and bridging several RNA helices of the 16S rRNA. Its function is as follows. Forms an intersubunit bridge (bridge B4) with the 23S rRNA of the 50S subunit in the ribosome. In Acholeplasma laidlawii (strain PG-8A), this protein is Small ribosomal subunit protein uS15.